Reading from the N-terminus, the 185-residue chain is Ribosome-recycling factor (185 aa).

A disordered region spans residues 132-152; sequence RRDANEQLKKMEKDSELTEDD.

The protein belongs to the RRF family.

It localises to the cytoplasm. Functionally, responsible for the release of ribosomes from messenger RNA at the termination of protein biosynthesis. May increase the efficiency of translation by recycling ribosomes from one round of translation to another. This chain is Ribosome-recycling factor, found in Alkaliphilus metalliredigens (strain QYMF).